A 602-amino-acid chain; its full sequence is Elongation factor 4 (602 aa).

The region spanning 8–190 is the tr-type G domain; that stretch reads DLIRNFSIVA…AIVHRLPPPK (183 aa). GTP is bound by residues 20–25 and 137–140; these read DHGKST and NKID.

The protein belongs to the TRAFAC class translation factor GTPase superfamily. Classic translation factor GTPase family. LepA subfamily.

It is found in the cell inner membrane. It catalyses the reaction GTP + H2O = GDP + phosphate + H(+). In terms of biological role, required for accurate and efficient protein synthesis under certain stress conditions. May act as a fidelity factor of the translation reaction, by catalyzing a one-codon backward translocation of tRNAs on improperly translocated ribosomes. Back-translocation proceeds from a post-translocation (POST) complex to a pre-translocation (PRE) complex, thus giving elongation factor G a second chance to translocate the tRNAs correctly. Binds to ribosomes in a GTP-dependent manner. The polypeptide is Elongation factor 4 (Cereibacter sphaeroides (strain ATCC 17023 / DSM 158 / JCM 6121 / CCUG 31486 / LMG 2827 / NBRC 12203 / NCIMB 8253 / ATH 2.4.1.) (Rhodobacter sphaeroides)).